A 249-amino-acid chain; its full sequence is MVKELLTFEEVSFAYSSSSPVIERLSFTVFENEIVAILAKSGSGKSTLFRLITRLESPDQGTIVCHAQGKIGYMPQQDLLLPWLTILENVSLPLEIQGKDKKEAKIIAASFFNRFGLVGTESLYPDALSGGMRQRAAFLRATLTSETLLLLDEPFASLDSLTKTSMHHWLVSMWEKEKRTLLLVTHDIEEALLLSDRLFIFTNQPLHGFTEVQVPPDLRRKMETTEKMEQQRSSLKKDIRALLIEESLR.

Residues 6-228 (LTFEEVSFAY…RRKMETTEKM (223 aa)) enclose the ABC transporter domain. 39 to 46 (AKSGSGKS) contacts ATP.

Belongs to the ABC transporter superfamily. The complex is likely composed of an ATP-binding protein (ThiZ), a transmembrane protein (ThiX) and a solute-binding protein (ThiY).

The protein localises to the cell membrane. It participates in cofactor biosynthesis; thiamine diphosphate biosynthesis. Its function is as follows. Participates in a thiamine pyrimidine salvage pathway as part of the ABC transporter complex ThiXYZ involved in the import of thiamine degradation products such as the formylaminopyrimidine N-formyl-4-amino-5-aminomethyl-2-methylpyrimidine (FAMP). Is likely responsible for energy coupling to the transport system. The chain is Formylaminopyrimidine import ATP-binding protein ThiZ from Halalkalibacterium halodurans (strain ATCC BAA-125 / DSM 18197 / FERM 7344 / JCM 9153 / C-125) (Bacillus halodurans).